A 185-amino-acid polypeptide reads, in one-letter code: Coordinator of PRMT5 and differentiation stimulator (185 aa).

Position 1 is an N-acetylmethionine (Met-1). Positions 1 to 109 (MDPPTAGAQS…MSGCLPKEQA (109 aa)) are disordered. Basic and acidic residues-rich tracts occupy residues 42–52 (SSQEKATENAT) and 66–77 (SPAHGEGTHCEE). Ser-66 carries the post-translational modification Phosphoserine. The span at 78–89 (EGFAEDDEDSDG) shows a compositional bias: acidic residues.

As to quaternary structure, interacts with PRMT5. Interacts with histone H4; specifically interacts with the N-terminus of histone H4 but not with histone H3. Interacts with CBFB. Found in a complex with PRMT5, RUNX1 and CBFB.

Its subcellular location is the nucleus. Its function is as follows. Histone-binding protein required for histone H4 methyltransferase activity of PRMT5. Specifically required for histone H4 'Arg-3' methylation mediated by PRMT5, but not histone H3 'Arg-8' methylation, suggesting that it modulates the substrate specificity of PRMT5. Specifically interacts with the N-terminus of histone H4 but not with histone H3, suggesting that it acts by promoting the association between histone H4 and PRMT5. Involved in CCNE1 promoter repression. Plays a role in muscle cell differentiation by modulating the recruitment of PRMT5 to the promoter of genes involved in the coordination between cell cycle exit and muscle differentiation. The sequence is that of Coordinator of PRMT5 and differentiation stimulator (COPRS) from Bos taurus (Bovine).